The sequence spans 152 residues: SsrA-binding protein (152 aa).

The segment covering 129–140 has biased composition (basic and acidic residues); sequence KREDMKKKDSQR. The interval 129–152 is disordered; sequence KREDMKKKDSQRELSQALKSKNRE. Polar residues predominate over residues 141–152; the sequence is ELSQALKSKNRE.

This sequence belongs to the SmpB family.

The protein localises to the cytoplasm. Functionally, required for rescue of stalled ribosomes mediated by trans-translation. Binds to transfer-messenger RNA (tmRNA), required for stable association of tmRNA with ribosomes. tmRNA and SmpB together mimic tRNA shape, replacing the anticodon stem-loop with SmpB. tmRNA is encoded by the ssrA gene; the 2 termini fold to resemble tRNA(Ala) and it encodes a 'tag peptide', a short internal open reading frame. During trans-translation Ala-aminoacylated tmRNA acts like a tRNA, entering the A-site of stalled ribosomes, displacing the stalled mRNA. The ribosome then switches to translate the ORF on the tmRNA; the nascent peptide is terminated with the 'tag peptide' encoded by the tmRNA and targeted for degradation. The ribosome is freed to recommence translation, which seems to be the essential function of trans-translation. The sequence is that of SsrA-binding protein from Pelobacter propionicus (strain DSM 2379 / NBRC 103807 / OttBd1).